We begin with the raw amino-acid sequence, 216 residues long: ATP phosphoribosyltransferase (216 aa).

Belongs to the ATP phosphoribosyltransferase family. Short subfamily. In terms of assembly, heteromultimer composed of HisG and HisZ subunits.

It localises to the cytoplasm. It carries out the reaction 1-(5-phospho-beta-D-ribosyl)-ATP + diphosphate = 5-phospho-alpha-D-ribose 1-diphosphate + ATP. Its pathway is amino-acid biosynthesis; L-histidine biosynthesis; L-histidine from 5-phospho-alpha-D-ribose 1-diphosphate: step 1/9. Its function is as follows. Catalyzes the condensation of ATP and 5-phosphoribose 1-diphosphate to form N'-(5'-phosphoribosyl)-ATP (PR-ATP). Has a crucial role in the pathway because the rate of histidine biosynthesis seems to be controlled primarily by regulation of HisG enzymatic activity. This chain is ATP phosphoribosyltransferase, found in Microcystis aeruginosa (strain NIES-843 / IAM M-2473).